We begin with the raw amino-acid sequence, 463 residues long: Soluble pyridine nucleotide transhydrogenase (463 aa).

35 to 44 (EKQQAVGGNC) is an FAD binding site.

It belongs to the class-I pyridine nucleotide-disulfide oxidoreductase family. The cofactor is FAD.

The protein localises to the cytoplasm. The enzyme catalyses NAD(+) + NADPH = NADH + NADP(+). Its function is as follows. Conversion of NADPH, generated by peripheral catabolic pathways, to NADH, which can enter the respiratory chain for energy generation. The chain is Soluble pyridine nucleotide transhydrogenase from Chromohalobacter salexigens (strain ATCC BAA-138 / DSM 3043 / CIP 106854 / NCIMB 13768 / 1H11).